The sequence spans 621 residues: MQDHNKKAMAGLTLAALGVVYGDIGTSPLYTLRECFVSQNLPTTPDNIFGILSLIFWSLIFVVSVKYVAFVLRADNRGEGGIMALMALARHYTTHAARWKIVLLGLFGAALFYGDAIITPAVSVLSAAEGMEVVSSGMEAYVLPMAVGVLVGLFLLQRHGTARVGLMFGPVMMVWFAILGILGLHQIIQQPAVLQALNPWHAVTFLSQHGFHAFLTLGSVVLALTGAEALYADMGHFGKTPIRRAWFSLVLPGLGLNYFGQGALLMSNPAAIKNPFFLLAPDWALLPMIALATLATVIASQAVISGAYSLTRQAILLGYCPRLEVHHTSDKEIGQIYMPFINWALLVAVLVVVLTFKNSSSLAAAYGIAVTGTMLITTMLFFVVARVNWRWPLPLALGITLLFGVIDTAFFAANVHKVADGGWLPLVMGMAIFTLMSTWKQGRDILFKRLREQALPLDDFIHNLEAYPPARVEGTAVFLTSTLHGVPHALLHNLKHNKVLHERVVLMTVRTEDIPYVPEDERLEIVQMSASFWRVMARYGFKEEPNVVEVLDKCAKEGFEMELMDTSFFLSRETIVSTGHPGMARWRQKIFLWMSKNALRATDFFQVPTNRVVELGAQVEL.

The next 12 membrane-spanning stretches (helical) occupy residues 9-29 (MAGL…TSPL), 48-68 (IFGI…VKYV), 101-121 (IVLL…ITPA), 136-156 (SGME…LFLL), 164-184 (VGLM…ILGL), 210-230 (GFHA…AEAL), 246-266 (WFSL…ALLM), 275-295 (PFFL…ATLA), 336-356 (IYMP…VLTF), 364-384 (AAYG…FFVV), 393-413 (LPLA…FFAA), and 418-438 (VADG…LMST).

It belongs to the HAK/KUP transporter (TC 2.A.72) family.

It localises to the cell inner membrane. The catalysed reaction is K(+)(in) + H(+)(in) = K(+)(out) + H(+)(out). Its function is as follows. Transport of potassium into the cell. Likely operates as a K(+):H(+) symporter. The polypeptide is Probable potassium transport system protein Kup 2 (Chromobacterium violaceum (strain ATCC 12472 / DSM 30191 / JCM 1249 / CCUG 213 / NBRC 12614 / NCIMB 9131 / NCTC 9757 / MK)).